A 207-amino-acid chain; its full sequence is FMN-dependent NADH:quinone oxidoreductase 2 (207 aa).

Residues serine 10, 16–18 (SIS), 96–99 (MYNL), and 141–144 (SRGG) each bind FMN.

This sequence belongs to the azoreductase type 1 family. Homodimer. Requires FMN as cofactor.

The catalysed reaction is 2 a quinone + NADH + H(+) = 2 a 1,4-benzosemiquinone + NAD(+). It carries out the reaction N,N-dimethyl-1,4-phenylenediamine + anthranilate + 2 NAD(+) = 2-(4-dimethylaminophenyl)diazenylbenzoate + 2 NADH + 2 H(+). Its function is as follows. Quinone reductase that provides resistance to thiol-specific stress caused by electrophilic quinones. Functionally, also exhibits azoreductase activity. Catalyzes the reductive cleavage of the azo bond in aromatic azo compounds to the corresponding amines. This is FMN-dependent NADH:quinone oxidoreductase 2 from Trichormus variabilis (strain ATCC 29413 / PCC 7937) (Anabaena variabilis).